Here is a 398-residue protein sequence, read N- to C-terminus: Cytochrome b (398 aa).

4 consecutive transmembrane segments (helical) span residues 38 to 58 (FGPLAGICLVIQIVTGVFLAM), 82 to 104 (WFLRYMHANGASMFLIVVHFHMF), 119 to 139 (VRCSGVVIFLLMIVTAFIGYV), and 185 to 205 (FFSLHYLLPFLLVGASILHLG). Heme b contacts are provided by histidine 88 and histidine 102. Heme b-binding residues include histidine 189 and histidine 203. Histidine 208 lines the a ubiquinone pocket. The next 4 membrane-spanning stretches (helical) occupy residues 231–251 (YYVKDLVGWVAFAIFSSIFIF), 295–316 (AGGVAAIAPVFICLLALPFLNQ), 328–348 (IYHIIYLLFLADRLLLGWIGC), and 355–374 (FVTIGQISPFVFFLFFAIMP).

The protein belongs to the cytochrome b family. In terms of assembly, the main subunits of complex b-c1 are: cytochrome b, cytochrome c1 and the Rieske protein. Heme b is required as a cofactor.

It is found in the mitochondrion inner membrane. Its function is as follows. Component of the ubiquinol-cytochrome c reductase complex (complex III or cytochrome b-c1 complex) that is part of the mitochondrial respiratory chain. The b-c1 complex mediates electron transfer from ubiquinol to cytochrome c. Contributes to the generation of a proton gradient across the mitochondrial membrane that is then used for ATP synthesis. The sequence is that of Cytochrome b (MT-CYB) from Daucus carota (Wild carrot).